A 323-amino-acid chain; its full sequence is Olfactory receptor 5P58 (323 aa).

Topologically, residues 1–28 (MAFLEDGNHTAVTEFILVGLTDDPVLKV) are extracellular. A glycan (N-linked (GlcNAc...) asparagine) is linked at Asn8. Residues 29 to 49 (ILFTIILCIYLVTVSGNLSTI) traverse the membrane as a helical segment. Topologically, residues 50–57 (LLIRVSSQ) are cytoplasmic. A helical transmembrane segment spans residues 58–78 (LHHPMYFFLSHLASVDLGYSS). At 79–102 (SVTPNMLINFLAENNTISYIGCSI) the chain is on the extracellular side. N-linked (GlcNAc...) asparagine glycosylation is present at Asn92. Cys100 and Cys192 are joined by a disulfide. A helical transmembrane segment spans residues 103 to 123 (QFGSATFFGVLECFLLAVMAY). At 124-136 (DRFVAICNPLLYS) the chain is on the cytoplasmic side. The helical transmembrane segment at 137-157 (IKMSTQVCVKLVVGSYIGSSL) threads the bilayer. At 158-199 (NASFVTVSIFNLLFCGPNKINHFFCDFDPLIELSCSDVSVPV) the chain is on the extracellular side. The chain crosses the membrane as a helical span at residues 200 to 220 (AVTSCSAGLITMITVFVIAVS). Residues 221–240 (YTYILITVLKMRSTEGRHKA) are Cytoplasmic-facing. A helical membrane pass occupies residues 241–261 (FSTCTSHLTAVTLFYGTVTFI). Topologically, residues 262–274 (YVMPKSNYSTDQN) are extracellular. Residue Asn268 is glycosylated (N-linked (GlcNAc...) asparagine). The chain crosses the membrane as a helical span at residues 275–295 (KVVSVFYMVVIPMLNPLIYSL). Residues 296 to 323 (RNNEIKGALKRQLGKKIFSQSNILFCKS) lie on the Cytoplasmic side of the membrane.

Belongs to the G-protein coupled receptor 1 family.

Its subcellular location is the cell membrane. Functionally, potential odorant receptor. The sequence is that of Olfactory receptor 5P58 from Mus musculus (Mouse).